Here is a 101-residue protein sequence, read N- to C-terminus: NAD(P)H-quinone oxidoreductase subunit 4L (101 aa).

3 helical membrane-spanning segments follow: residues 3-23 (LRYFLLLAAALFCIGIYGLIT), 30-50 (VLMSIELLLNAVNLNLMAFSN), and 64-84 (VFVITVAAAEAAVGLAIVLAI).

It belongs to the complex I subunit 4L family. As to quaternary structure, NDH-1 can be composed of about 15 different subunits; different subcomplexes with different compositions have been identified which probably have different functions.

It is found in the cellular thylakoid membrane. The enzyme catalyses a plastoquinone + NADH + (n+1) H(+)(in) = a plastoquinol + NAD(+) + n H(+)(out). It carries out the reaction a plastoquinone + NADPH + (n+1) H(+)(in) = a plastoquinol + NADP(+) + n H(+)(out). Its function is as follows. NDH-1 shuttles electrons from an unknown electron donor, via FMN and iron-sulfur (Fe-S) centers, to quinones in the respiratory and/or the photosynthetic chain. The immediate electron acceptor for the enzyme in this species is believed to be plastoquinone. Couples the redox reaction to proton translocation, and thus conserves the redox energy in a proton gradient. Cyanobacterial NDH-1 also plays a role in inorganic carbon-concentration. In Nostoc sp. (strain PCC 7120 / SAG 25.82 / UTEX 2576), this protein is NAD(P)H-quinone oxidoreductase subunit 4L.